We begin with the raw amino-acid sequence, 326 residues long: ATP phosphoribosyltransferase regulatory subunit (326 aa).

Belongs to the class-II aminoacyl-tRNA synthetase family. HisZ subfamily. In terms of assembly, heteromultimer composed of HisG and HisZ subunits.

Its subcellular location is the cytoplasm. Its pathway is amino-acid biosynthesis; L-histidine biosynthesis; L-histidine from 5-phospho-alpha-D-ribose 1-diphosphate: step 1/9. In terms of biological role, required for the first step of histidine biosynthesis. May allow the feedback regulation of ATP phosphoribosyltransferase activity by histidine. The polypeptide is ATP phosphoribosyltransferase regulatory subunit (Streptococcus thermophilus (strain ATCC BAA-491 / LMD-9)).